We begin with the raw amino-acid sequence, 399 residues long: Probable inactive 2-oxoglutarate-dependent dioxygenase AOP2 (399 aa).

A Fe2OG dioxygenase domain is found at 248 to 345; that stretch reads GGDDVEANDD…RYTAAIFTCP (98 aa). H268, D270, and H325 together coordinate Fe cation. R336 is a binding site for 2-oxoglutarate.

The protein belongs to the iron/ascorbate-dependent oxidoreductase family. Fe(2+) is required as a cofactor.

The protein is Probable inactive 2-oxoglutarate-dependent dioxygenase AOP2 (AOP2) of Arabidopsis thaliana (Mouse-ear cress).